The sequence spans 443 residues: Thymidine phosphorylase (443 aa).

Belongs to the thymidine/pyrimidine-nucleoside phosphorylase family. In terms of assembly, homodimer.

The catalysed reaction is thymidine + phosphate = 2-deoxy-alpha-D-ribose 1-phosphate + thymine. It functions in the pathway pyrimidine metabolism; dTMP biosynthesis via salvage pathway; dTMP from thymine: step 1/2. Its function is as follows. The enzymes which catalyze the reversible phosphorolysis of pyrimidine nucleosides are involved in the degradation of these compounds and in their utilization as carbon and energy sources, or in the rescue of pyrimidine bases for nucleotide synthesis. The sequence is that of Thymidine phosphorylase from Aeromonas salmonicida (strain A449).